Reading from the N-terminus, the 175-residue chain is ATP synthase subunit b 2 (175 aa).

A helical transmembrane segment spans residues Leu20–Trp40.

The protein belongs to the ATPase B chain family. As to quaternary structure, F-type ATPases have 2 components, F(1) - the catalytic core - and F(0) - the membrane proton channel. F(1) has five subunits: alpha(3), beta(3), gamma(1), delta(1), epsilon(1). F(0) has four main subunits: a(1), b(2) and c(10-14). The alpha and beta chains form an alternating ring which encloses part of the gamma chain. F(1) is attached to F(0) by a central stalk formed by the gamma and epsilon chains, while a peripheral stalk is formed by the delta and b chains.

It is found in the cell inner membrane. In terms of biological role, f(1)F(0) ATP synthase produces ATP from ADP in the presence of a proton or sodium gradient. F-type ATPases consist of two structural domains, F(1) containing the extramembraneous catalytic core and F(0) containing the membrane proton channel, linked together by a central stalk and a peripheral stalk. During catalysis, ATP synthesis in the catalytic domain of F(1) is coupled via a rotary mechanism of the central stalk subunits to proton translocation. Its function is as follows. Component of the F(0) channel, it forms part of the peripheral stalk, linking F(1) to F(0). The sequence is that of ATP synthase subunit b 2 from Prosthecochloris aestuarii (strain DSM 271 / SK 413).